A 176-amino-acid chain; its full sequence is NAD(P)H-quinone oxidoreductase subunit 6, chloroplastic (176 aa).

The next 5 helical transmembrane spans lie at 10–30 (ILVL…VLLT), 33–53 (IYSA…YFLL), 60–80 (VAQL…AVMF), 95–115 (IGDG…MTTI), and 152–172 (FYLP…GAIT).

Belongs to the complex I subunit 6 family. As to quaternary structure, NDH is composed of at least 16 different subunits, 5 of which are encoded in the nucleus.

The protein localises to the plastid. Its subcellular location is the chloroplast thylakoid membrane. The catalysed reaction is a plastoquinone + NADH + (n+1) H(+)(in) = a plastoquinol + NAD(+) + n H(+)(out). It catalyses the reaction a plastoquinone + NADPH + (n+1) H(+)(in) = a plastoquinol + NADP(+) + n H(+)(out). Functionally, NDH shuttles electrons from NAD(P)H:plastoquinone, via FMN and iron-sulfur (Fe-S) centers, to quinones in the photosynthetic chain and possibly in a chloroplast respiratory chain. The immediate electron acceptor for the enzyme in this species is believed to be plastoquinone. Couples the redox reaction to proton translocation, and thus conserves the redox energy in a proton gradient. In Brachypodium distachyon (Purple false brome), this protein is NAD(P)H-quinone oxidoreductase subunit 6, chloroplastic (ndhG).